Reading from the N-terminus, the 217-residue chain is Probable transaldolase (217 aa).

Catalysis depends on Lys83, which acts as the Schiff-base intermediate with substrate.

Belongs to the transaldolase family. Type 3B subfamily.

It is found in the cytoplasm. It carries out the reaction D-sedoheptulose 7-phosphate + D-glyceraldehyde 3-phosphate = D-erythrose 4-phosphate + beta-D-fructose 6-phosphate. Its pathway is carbohydrate degradation; pentose phosphate pathway; D-glyceraldehyde 3-phosphate and beta-D-fructose 6-phosphate from D-ribose 5-phosphate and D-xylulose 5-phosphate (non-oxidative stage): step 2/3. Functionally, transaldolase is important for the balance of metabolites in the pentose-phosphate pathway. This is Probable transaldolase from Lactiplantibacillus plantarum (strain ATCC BAA-793 / NCIMB 8826 / WCFS1) (Lactobacillus plantarum).